A 146-amino-acid polypeptide reads, in one-letter code: Snaclec jerdonibitin subunit beta (146 aa).

An N-terminal signal peptide occupies residues 1–23; that stretch reads MGRFIFVSFGLLVVFLSLSGTGA. Cystine bridges form between Cys25-Cys36, Cys53-Cys142, and Cys119-Cys134. The C-type lectin domain maps to 32–143; that stretch reads YEGHCYRVFQ…CSKTYPFVCK (112 aa).

It belongs to the snaclec family. Heterodimer of subunits alpha and beta; disulfide-linked. Expressed by the venom gland.

It localises to the secreted. Its function is as follows. Snaclec that dose-dependently inhibits platelet aggregation induced by ristocetin or low-dose thrombin, but not by high-dose thrombin. Binds to GPIbalpha (GP1BA). In vivo, also dose-dependently induces thrombocytopenia of mice and platelet counts remains at very low level even after 18 hours intravenous injection. The polypeptide is Snaclec jerdonibitin subunit beta (Protobothrops jerdonii (Jerdon's pitviper)).